Here is a 497-residue protein sequence, read N- to C-terminus: Transcription termination/antitermination protein NusA (497 aa).

One can recognise an S1 motif domain in the interval 135-200 (GKILTGIVKK…RGAQLFVTRS (66 aa)). The KH domain occupies 302–372 (RHTIDIAVDS…LKIDQKISNI (71 aa)). Tandem repeats lie at residues 364-414 (KIDQ…KKAL) and 439-489 (GMNQ…RNIC). Positions 364–489 (KIDQKISNIL…MLIMAARNIC (126 aa)) are 2 X 51 AA approximate repeats.

The protein belongs to the NusA family. In terms of assembly, monomer. Binds directly to the core enzyme of the DNA-dependent RNA polymerase and to nascent RNA.

The protein resides in the cytoplasm. Functionally, participates in both transcription termination and antitermination. The sequence is that of Transcription termination/antitermination protein NusA from Buchnera aphidicola subsp. Baizongia pistaciae (strain Bp).